A 207-amino-acid polypeptide reads, in one-letter code: 8-oxoguanine DNA glycosylase/AP lyase (207 aa).

Active-site residues include lysine 128 and aspartate 146.

This sequence belongs to the type-2 OGG1 family.

The catalysed reaction is 2'-deoxyribonucleotide-(2'-deoxyribose 5'-phosphate)-2'-deoxyribonucleotide-DNA = a 3'-end 2'-deoxyribonucleotide-(2,3-dehydro-2,3-deoxyribose 5'-phosphate)-DNA + a 5'-end 5'-phospho-2'-deoxyribonucleoside-DNA + H(+). Functionally, catalyzes the excision of an oxidatively damaged form of guanine (7,8-dihydro-8-oxoguanine = 8-oxoG) from DNA. Also cleaves the DNA backbone at apurinic/apyrimidinic sites (AP sites). The chain is 8-oxoguanine DNA glycosylase/AP lyase from Saccharolobus islandicus (strain Y.N.15.51 / Yellowstone #2) (Sulfolobus islandicus).